Here is a 155-residue protein sequence, read N- to C-terminus: Transcriptional repressor NrdR (155 aa).

Residues 3-34 fold into a zinc finger; sequence CPYCGHLEDRVVDSRETQDGQATRRRRACLSC. The ATP-cone domain occupies 49-139; it reads PQVVKKDGRR…VYRAFRDVGE (91 aa).

Belongs to the NrdR family. Zn(2+) serves as cofactor.

Negatively regulates transcription of bacterial ribonucleotide reductase nrd genes and operons by binding to NrdR-boxes. This Anaeromyxobacter dehalogenans (strain 2CP-1 / ATCC BAA-258) protein is Transcriptional repressor NrdR.